Here is a 456-residue protein sequence, read N- to C-terminus: Histidinol dehydrogenase homolog (456 aa).

Position 279 (histidine 279) interacts with Zn(2+). Residues glutamate 347 and histidine 348 each act as proton acceptor in the active site. Histidine 440 serves as a coordination point for Zn(2+).

The protein belongs to the histidinol dehydrogenase family. The cofactor is Zn(2+).

The protein is Histidinol dehydrogenase homolog of Rhizobium meliloti (strain 1021) (Ensifer meliloti).